Consider the following 483-residue polypeptide: ATP-dependent RNA helicase dbp-5 (483 aa).

The disordered stretch occupies residues 1–47 (MADLASRITKPDEAPAAAPEAAPVSAPASEEPKAPENETSIEESQSN). Low complexity predominate over residues 14-29 (APAAAPEAAPVSAPAS). The Q motif motif lies at 74 to 102 (SSFDELGLPEAVNRGLLAINFKKPSKVQE). The region spanning 107–276 (LMLSDPPRNM…ERFAPNANQM (170 aa)) is the Helicase ATP-binding domain. 120–127 (SQSGTGKT) contacts ATP. The DEAD box motif lies at 223 to 226 (DEAD). Positions 304-455 (ILCKLYGLMT…LIQLNPNDLD (152 aa)) constitute a Helicase C-terminal domain.

The protein belongs to the DEAD box helicase family. DDX19/DBP5 subfamily. Associates with the nuclear pore complex.

The protein localises to the cytoplasm. The protein resides in the nucleus. It localises to the nuclear pore complex. It is found in the nucleus membrane. It carries out the reaction ATP + H2O = ADP + phosphate + H(+). ATP-dependent RNA helicase associated with the nuclear pore complex and essential for mRNA export from the nucleus. May participate in a terminal step of mRNA export through the removal of proteins that accompany mRNA through the nucleopore complex. May also be involved in early transcription. The sequence is that of ATP-dependent RNA helicase dbp-5 (dbp-5) from Neurospora crassa (strain ATCC 24698 / 74-OR23-1A / CBS 708.71 / DSM 1257 / FGSC 987).